The chain runs to 324 residues: Alkanal monooxygenase beta chain (324 aa).

It belongs to the bacterial luciferase oxidoreductase family. As to quaternary structure, heterodimer of an alpha and a beta chain.

The catalysed reaction is a long-chain fatty aldehyde + FMNH2 + O2 = a long-chain fatty acid + hnu + FMN + H2O + 2 H(+). Its function is as follows. Light-emitting reaction in luminous bacteria. The specific role of the beta subunit is unknown, but it is absolutely required for bioluminescence activity. The polypeptide is Alkanal monooxygenase beta chain (luxB) (Photorhabdus laumondii subsp. laumondii (strain DSM 15139 / CIP 105565 / TT01) (Photorhabdus luminescens subsp. laumondii)).